The sequence spans 299 residues: Small ribosomal subunit biogenesis GTPase RsgA (299 aa).

Residues 73–232 (CSWLTRPQVA…VADTPGFNRP (160 aa)) enclose the CP-type G domain. GTP is bound by residues 122 to 125 (TKGD) and 174 to 182 (GPSGVGKSS). The Zn(2+) site is built by C257, C262, H264, and C270.

The protein belongs to the TRAFAC class YlqF/YawG GTPase family. RsgA subfamily. Monomer. Associates with 30S ribosomal subunit, binds 16S rRNA. Requires Zn(2+) as cofactor.

It is found in the cytoplasm. One of several proteins that assist in the late maturation steps of the functional core of the 30S ribosomal subunit. Helps release RbfA from mature subunits. May play a role in the assembly of ribosomal proteins into the subunit. Circularly permuted GTPase that catalyzes slow GTP hydrolysis, GTPase activity is stimulated by the 30S ribosomal subunit. In Parasynechococcus marenigrum (strain WH8102), this protein is Small ribosomal subunit biogenesis GTPase RsgA.